The sequence spans 466 residues: Putative multidrug resistance protein MdtD (466 aa).

Transmembrane regions (helical) follow at residues 11-31, 48-68, 71-91, 105-125, 137-157, 164-184, 194-214, 218-238, 262-282, 292-312, 328-347, 351-370, 402-422, and 429-449; these read LWIVAFGFFMQTLDTTIVNTA, SVIVSYVLTVAVMLPASGWLA, IGVKNIFFAAILLFTLGSLLC, VIQGIGGAMMVPVGRLTVMKI, FVTLPGQIGPLLGPALGGFLV, WIFLINLPVGIIGALATWFLM, FDISGFVWLAVGMATLTLALD, SLGIPPIAIFALIAIGLIALL, FSIGLTGGLLARIGSGMLPFM, GFSPFHAGLMMVPMVLGSMGI, VLVASTLLLALVTALFALVA, WIWMIPVVLFFLGTVNAIRF, SLGVSIAGILLGIFSQPHIAA, and TVFLYTYLSMVVIIALPALIF.

This sequence belongs to the major facilitator superfamily. TCR/Tet family.

The protein resides in the cell inner membrane. The sequence is that of Putative multidrug resistance protein MdtD from Pectobacterium atrosepticum (strain SCRI 1043 / ATCC BAA-672) (Erwinia carotovora subsp. atroseptica).